We begin with the raw amino-acid sequence, 288 residues long: Elongation factor Ts (288 aa).

Residues 82-85 (TDFV) form an involved in Mg(2+) ion dislocation from EF-Tu region.

The protein belongs to the EF-Ts family.

The protein resides in the cytoplasm. Its function is as follows. Associates with the EF-Tu.GDP complex and induces the exchange of GDP to GTP. It remains bound to the aminoacyl-tRNA.EF-Tu.GTP complex up to the GTP hydrolysis stage on the ribosome. The chain is Elongation factor Ts from Prosthecochloris aestuarii (strain DSM 271 / SK 413).